The sequence spans 409 residues: Lissencephaly-1 homolog (409 aa).

In terms of domain architecture, LisH spans 7 to 39; the sequence is QREELNQAIADYLGTNGYADSLEAFRKEADLST. A coiled-coil region spans residues 54-81; sequence TSVIRLQKKVMELEAKLTEAEKEVIEGA. WD repeat units follow at residues 104–145, 146–185, 189–228, 231–270, 273–332, 335–374, and 377–409; these read GHRA…RSLK, GHTDSVQDVAFDAQGKLLVSCSADLSIKLWDFQQSYACVK, GHDHNVSSVAFVPAGDYVLSASRDRTIKMWEVATGYCVKT, GHREWVRMVRVHIEGSLFATCSNDHTIRVWLTNSKDCKVE, DHEH…CLLT, GHDNWVRGLAFHPGGKYLVSASDDKTIRVWDLRNKRCMKT, and AHQHFCTSIDFHKAHPYVISGSVDQTVKVWECR.

It belongs to the WD repeat LIS1/nudF family.

The protein localises to the cytoplasm. Its subcellular location is the cytoskeleton. The protein resides in the microtubule organizing center. It localises to the centrosome. In terms of biological role, positively regulates the activity of the minus-end directed microtubule motor protein dynein. May enhance dynein-mediated microtubule sliding by targeting dynein to the microtubule plus end. Required for several dynein- and microtubule-dependent processes. This chain is Lissencephaly-1 homolog, found in Drosophila willistoni (Fruit fly).